A 385-amino-acid chain; its full sequence is DNA replication and repair protein RecF (385 aa).

An ATP-binding site is contributed by 30–37; it reads GPNGFGKT.

The protein belongs to the RecF family.

The protein resides in the cytoplasm. The RecF protein is involved in DNA metabolism; it is required for DNA replication and normal SOS inducibility. RecF binds preferentially to single-stranded, linear DNA. It also seems to bind ATP. In Mycobacterium marinum (strain ATCC BAA-535 / M), this protein is DNA replication and repair protein RecF.